The primary structure comprises 35 residues: PSPTRRSKSRSKSRSRSRSASAGKAAKRAKSKTAK.

2 stretches are compositionally biased toward basic residues: residues 1–17 and 25–35; these read PSPTRRSKSRSKSRSRS and AAKRAKSKTAK. The interval 1–35 is disordered; sequence PSPTRRSKSRSKSRSRSRSASAGKAAKRAKSKTAK.

In terms of tissue distribution, sperm.

It localises to the nucleus. The protein resides in the chromosome. In terms of biological role, involved in nuclear basic protein transition: histones are replaced by spermatid specific proteins which are themselves replaced by protamines in late spermatids. The chain is Sperm-specific protein Phi-1 from Mytilus californianus (California mussel).